We begin with the raw amino-acid sequence, 234 residues long: Potassium/proton antiporter CemA (234 aa).

Helical transmembrane passes span isoleucine 8 to leucine 28, threonine 117 to leucine 137, isoleucine 157 to isoleucine 177, and isoleucine 193 to tryptophan 213.

This sequence belongs to the CemA family.

The protein localises to the plastid. It is found in the chloroplast inner membrane. The catalysed reaction is K(+)(in) + H(+)(out) = K(+)(out) + H(+)(in). In terms of biological role, contributes to K(+)/H(+) antiport activity by supporting proton efflux to control proton extrusion and homeostasis in chloroplasts in a light-dependent manner to modulate photosynthesis. Prevents excessive induction of non-photochemical quenching (NPQ) under continuous-light conditions. Indirectly promotes efficient inorganic carbon uptake into chloroplasts. In Citrus sinensis (Sweet orange), this protein is Potassium/proton antiporter CemA.